The primary structure comprises 469 residues: Sulfate adenylyltransferase subunit 1 (469 aa).

Residues 22 to 236 (KDMLRFLTCG…TLENIEIGND (215 aa)) form the tr-type G domain. The interval 31–38 (GSVDDGKS) is G1. Position 31–38 (31–38 (GSVDDGKS)) interacts with GTP. Residues 89-93 (GITID) form a G2 region. The G3 stretch occupies residues 110 to 113 (DTPG). Residues 110–114 (DTPGH) and 165–168 (NKMD) each bind GTP. The tract at residues 165 to 168 (NKMD) is G4. Positions 202–204 (SAL) are G5.

The protein belongs to the TRAFAC class translation factor GTPase superfamily. Classic translation factor GTPase family. CysN/NodQ subfamily. Heterodimer composed of CysD, the smaller subunit, and CysN.

The catalysed reaction is sulfate + ATP + H(+) = adenosine 5'-phosphosulfate + diphosphate. It participates in sulfur metabolism; hydrogen sulfide biosynthesis; sulfite from sulfate: step 1/3. Its function is as follows. With CysD forms the ATP sulfurylase (ATPS) that catalyzes the adenylation of sulfate producing adenosine 5'-phosphosulfate (APS) and diphosphate, the first enzymatic step in sulfur assimilation pathway. APS synthesis involves the formation of a high-energy phosphoric-sulfuric acid anhydride bond driven by GTP hydrolysis by CysN coupled to ATP hydrolysis by CysD. This chain is Sulfate adenylyltransferase subunit 1, found in Pseudoalteromonas atlantica (strain T6c / ATCC BAA-1087).